A 500-amino-acid chain; its full sequence is MLSNARIIAAGCIAAGSLVAAGPCDIYSSGGTPCVAAHSTTRALFSAYTGPLYQVKRGSDGATTAISPLSSGVANAAAQDAFCAGTTCLITIIYDQSGRGNHLREAPPGGFSGPESNGYDNLASAIGAPVTLNGQKAYGVFVSPGTGYRNNAASGTAKGDAAEGMYAVLDGTHYNGACCFDYGNAETNSRDTGNGHMEAIYFGDSTVWGTGSGKGPWIMADLENGLFSGSSPGNNAGDPSISYRFVTAAIKGQPNQWAIRGGNAASGSLSTFYSGARPQVSGYNPMSKEGAIILGIGGDNSNGGQGTFYEGVMTSGYPSDATENSVQANIVAARYAVAPLTSGPALTVGSSISLRATTACCTTRYIAHSGSTVNTQVVSSSSATALKQQASWTVRAGLANNACFSFESQDTSGSYIRHSNFGLVLNANDGSKLFAEDATFCTQAGINGQGSSIRSWSYPTRYFRHYNNTLYIASNGGVHVFDATAAFNDDVSFVVSGGFA.

An N-terminal signal peptide occupies residues 1 to 21 (MLSNARIIAAGCIAAGSLVAA). Asn-467 is a glycosylation site (N-linked (GlcNAc...) asparagine).

Belongs to the glycosyl hydrolase 54 family.

It carries out the reaction Hydrolysis of terminal non-reducing alpha-L-arabinofuranoside residues in alpha-L-arabinosides.. It catalyses the reaction Hydrolysis of (1-&gt;4)-beta-D-xylans, to remove successive D-xylose residues from the non-reducing termini.. The sequence is that of Arabinofuranosidase/B-xylosidase (xyl1) from Trichoderma koningii (Hypocrea koningii).